The following is a 132-amino-acid chain: MDTKTQSLPNTHAQPHSNSRPQSHACHHCSCSQHCQSRSRSRSCRSRSSSRRPRSHRSPTGRQGQSPGPSPPLRRHRHTMHSHQCPSRPVTHSCSHSKNRKNLEGKVIKRKQVKRSKQVYKRKRQSSGRKYN.

A compositionally biased stretch (polar residues) spans 1-20 (MDTKTQSLPNTHAQPHSNSR). The disordered stretch occupies residues 1 to 132 (MDTKTQSLPN…KRQSSGRKYN (132 aa)). Residues H12, H16, H24, C29, C31, and C35 each contribute to the Zn(2+) site. The span at 37–59 (SRSRSRSCRSRSSSRRPRSHRSP) shows a compositional bias: basic residues. Over residues 82–94 (SHQCPSRPVTHSC) the composition is skewed to polar residues. Positions 105–113 (GKVIKRKQV) match the Nuclear localization signal motif. Residues 108 to 132 (IKRKQVKRSKQVYKRKRQSSGRKYN) are compositionally biased toward basic residues. S127 bears the Phosphoserine mark.

It belongs to the nuclear transition protein 2 family. As to expression, testis.

It is found in the nucleus. It localises to the nucleolus. The protein resides in the chromosome. Functionally, plays a key role in the replacement of histones to protamine in the elongating spermatids of mammals. In condensing spermatids, loaded onto the nucleosomes, where it promotes the recruitment and processing of protamines, which are responsible for histone eviction. This is Nuclear transition protein 2 (TNP2) from Bos taurus (Bovine).